We begin with the raw amino-acid sequence, 510 residues long: MSAKKPMALVILDGYGYREDNQDNAIANAKTPVLDGLIANQPNTLISASGLDVGLPDGQMGNSEVGHTNIGAGRVVYQDLTRITKSIADGEFGQTEALVNAVDKAVKVDKAVHIMGLMSPGGVHSHEDHIYAAVEMAAARGAEKIYLHAFLDGRDTPPRSAENTLARFQELFAKLGKGRVASLIGRYYAMDRDNNWDRVQESYDLLTQAKAEFTFDTAVAGLEAAYARDENDEFVKATEIKAEGEESAVIVDGDAVIFMNYRADRAREITRAFVPDFDGFARNVFPAIDFVMLTQYAADIPLLCAFPPASLENTYGEWLSKEGKTQLRISETEKYAHVTFFFNGGKEDEFEGEERQLVASPKVATYDLQPEMSAPELTEKLVAAIKGGKYDAIVCNFPNCDMVGHTGVYDAAVKAVESLDECLGKVVEAIKEADGQLLITADHGNAEMMVNPETGGIHTAHTNLPVPLIYVGNKDVEFKEGGKLSDLAPTMLSLSGIDIPVEMSGDVIVK.

Residues Asp13 and Ser63 each coordinate Mn(2+). Residue Ser63 is the Phosphoserine intermediate of the active site. Residues His124, 154–155 (RD), Arg186, Arg192, 262–265 (RADR), and Lys334 each bind substrate. Mn(2+) contacts are provided by Asp401, His405, Asp442, His443, and His461.

Belongs to the BPG-independent phosphoglycerate mutase family. In terms of assembly, monomer. It depends on Mn(2+) as a cofactor.

The catalysed reaction is (2R)-2-phosphoglycerate = (2R)-3-phosphoglycerate. The protein operates within carbohydrate degradation; glycolysis; pyruvate from D-glyceraldehyde 3-phosphate: step 3/5. In terms of biological role, catalyzes the interconversion of 2-phosphoglycerate and 3-phosphoglycerate. The chain is 2,3-bisphosphoglycerate-independent phosphoglycerate mutase from Vibrio atlanticus (strain LGP32) (Vibrio splendidus (strain Mel32)).